The chain runs to 69 residues: DNA gyrase inhibitor YacG (69 aa).

Positions 13, 16, 32, and 36 each coordinate Zn(2+).

This sequence belongs to the DNA gyrase inhibitor YacG family. In terms of assembly, interacts with GyrB. Requires Zn(2+) as cofactor.

Its function is as follows. Inhibits all the catalytic activities of DNA gyrase by preventing its interaction with DNA. Acts by binding directly to the C-terminal domain of GyrB, which probably disrupts DNA binding by the gyrase. The polypeptide is DNA gyrase inhibitor YacG (Neisseria meningitidis serogroup B (strain ATCC BAA-335 / MC58)).